The chain runs to 508 residues: Ankyrin repeat domain-containing protein 34B (508 aa).

4 ANK repeats span residues 9-38, 42-79, 83-113, and 117-146; these read TDGN…YINE, RGET…DPNI, SGKS…DLSL, and SGYS…AKGK. The segment at 157–185 is disordered; it reads PSGRHTTQHHLNMPPADMDGSHPPATPSE. Phosphoserine is present on Ser-260. The residue at position 269 (Thr-269) is a Phosphothreonine. Ser-293 carries the phosphoserine modification. A compositionally biased stretch (polar residues) spans 361 to 370; sequence GANHYSSDSQ. The interval 361–380 is disordered; the sequence is GANHYSSDSQLAEGVTPPTV.

Belongs to the ANKRD34 family. In terms of processing, phosphorylated. As to expression, specifically and constitutively expressed in brain (at protein level).

It is found in the cytoplasm. The protein localises to the nucleus. The chain is Ankyrin repeat domain-containing protein 34B (Ankrd34b) from Mus musculus (Mouse).